A 165-amino-acid polypeptide reads, in one-letter code: MADEEKLPPGWEKRMSRSSGRVYYFNHITNASQWERPSGGSTVGGSSKNGQGEPAKVRCSHLLVKHSQSRRPSSWRQEKITRSKEEALELINGYIQKIKSGEEDFESLASQFSDCSSAKARGDLGPFSRGQMQKPFEDASFALRTGEMSGPVFTDSGIHIILRTE.

One can recognise a WW domain in the interval 5–39 (EKLPPGWEKRMSRSSGRVYYFNHITNASQWERPSG). The segment at 33 to 56 (QWERPSGGSTVGGSSKNGQGEPAK) is disordered. N6-acetyllysine is present on K48. Residues 54–165 (PAKVRCSHLL…SGIHIILRTE (112 aa)) enclose the PpiC domain. A phosphoserine mark is found at S73 and S110.

In terms of assembly, interacts with STIL. Interacts with KIF20B. Interacts with NEK6. Interacts (via WW domain) with PRKX. Interacts with BTK. Interacts (via PpiC domain) with DAPK1. Interacts with the phosphorylated form of RAF1. Interacts (via WW domain) with ATCAY; upon NGF stimulation. Interacts with PML. Interacts with BCL6. Interacts with FBXW7, disrupting FBXW7 dimerization and promoting FBXW7 autoubiquitination and degradation. Directly interacts with RBBP8/CtIP; this interaction depends upon RBBP8 phosphorylation. Interacts (via WW domain) with IRAK3/IRAK-M (when phosphorylated at 'Ser-110') in response to IL33-mediated (but not TLR4 ligand LPS) dendritic cell stimulation. Interacts with PGK1 (when phosphorylated at 'Ser-203'); the interaction is direct, occurs under hypoxic conditions, and targets PGK1 to the mitochondrion by promoting interactions with the TOM complex. In terms of processing, phosphorylation at Ser-73 by DAPK1 results in inhibition of its catalytic activity, nuclear localization, and its ability to induce centrosome amplification, chromosome instability and cell transformation. Ser-73 is dephosphorylated upon IL33-stimulation of dendritic cells. In terms of tissue distribution, expressed in dendritic cells (at protein level).

The protein localises to the nucleus. Its subcellular location is the nucleus speckle. It is found in the cytoplasm. It catalyses the reaction [protein]-peptidylproline (omega=180) = [protein]-peptidylproline (omega=0). Peptidyl-prolyl cis/trans isomerase (PPIase) that binds to and isomerizes specific phosphorylated Ser/Thr-Pro (pSer/Thr-Pro) motifs. By inducing conformational changes in a subset of phosphorylated proteins, acts as a molecular switch in multiple cellular processes. Displays a preference for an acidic residue N-terminal to the isomerized proline bond. Regulates mitosis presumably by interacting with NIMA and attenuating its mitosis-promoting activity. Down-regulates kinase activity of BTK. Can transactivate multiple oncogenes and induce centrosome amplification, chromosome instability and cell transformation. Required for the efficient dephosphorylation and recycling of RAF1 after mitogen activation. Binds and targets PML and BCL6 for degradation in a phosphorylation-dependent manner. Acts as a regulator of JNK cascade by binding to phosphorylated FBXW7, disrupting FBXW7 dimerization and promoting FBXW7 autoubiquitination and degradation: degradation of FBXW7 leads to subsequent stabilization of JUN. May facilitate the ubiquitination and proteasomal degradation of RBBP8/CtIP through CUL3/KLHL15 E3 ubiquitin-protein ligase complex, hence favors DNA double-strand repair through error-prone non-homologous end joining (NHEJ) over error-free, RBBP8-mediated homologous recombination (HR). Upon IL33-induced lung inflammation, catalyzes cis-trans isomerization of phosphorylated IRAK3/IRAK-M, inducing IRAK3 stabilization, nuclear translocation and expression of pro-inflammatory genes in dendritic cells. Catalyzes cis-trans isomerization of phosphorylated phosphoglycerate kinase PGK1 under hypoxic conditions to promote its binding to the TOM complex and targeting to the mitochondrion. This is Peptidyl-prolyl cis-trans isomerase NIMA-interacting 1 (Pin1) from Mus musculus (Mouse).